We begin with the raw amino-acid sequence, 456 residues long: MKKSPGLSDYLWAWTLFLSTLTGRSYGQPSLQDELKDNTTVFTRILDRLLDGYDNRLRPGLGERVTEVKTDIFVTSFGPVSDHDMEYTIDVFFRQSWKDERLKFKGPMTVLRLNNLMASKIWTPDTFFHNGKKSVAHNMTMPNKLLRITEDGTLLYTMRLTVRAECPMHLEDFPMDAHACPLKFGSYAYTRAEVVYEWTREPARSVVVAEDGSRLNQYDLLGQTVDSGIVQSSTGEYVVMTTHFHLKRKIGYFVIQTYLPCIMTVILSQVSFWLNRESVPARTVFGVTTVLTMTTLSISARNSLPKVAYATAMDWFIAVCYAFVFSALIEFATVNYFTKRGYAWDGKSVVPEKPKKVKDPLIKKNNTYAPTATSYTPNLARGDPGLATIAKSATIEPKEVKPETKPPEPKKTFNSVSKIDRLSRIAFPLLFGIFNLVYWATYLNREPQLKAPTPHQ.

The first 27 residues, methionine 1–glycine 27, serve as a signal peptide directing secretion. At glutamine 28–phenylalanine 253 the chain is on the extracellular side. The N-linked (GlcNAc...) asparagine glycan is linked to asparagine 38. Arginine 94 contributes to the 4-aminobutanoate binding site. Residue asparagine 138 is glycosylated (N-linked (GlcNAc...) asparagine). Residue threonine 157 coordinates 4-aminobutanoate. An intrachain disulfide couples cysteine 166 to cysteine 180. A helical transmembrane segment spans residues valine 254–leucine 274. Residues asparagine 275–valine 279 are Cytoplasmic-facing. A helical membrane pass occupies residues proline 280–arginine 301. The Extracellular portion of the chain corresponds to asparagine 302–threonine 311. The chain crosses the membrane as a helical span at residues alanine 312–threonine 333. The Cytoplasmic segment spans residues valine 334–arginine 421. A helical transmembrane segment spans residues leucine 422–threonine 441. The Extracellular portion of the chain corresponds to tyrosine 442 to glutamine 456.

This sequence belongs to the ligand-gated ion channel (TC 1.A.9) family. Gamma-aminobutyric acid receptor (TC 1.A.9.5) subfamily. GABRA1 sub-subfamily. In terms of assembly, heteropentamer, formed by a combination of alpha (GABRA1-6), beta (GABRB1-3), gamma (GABRG1-3), delta (GABRD), epsilon (GABRE), rho (GABRR1-3), pi (GABRP) and theta (GABRQ) subunits, each subunit exhibiting distinct physiological and pharmacological properties. Interacts with UBQLN1. Interacts with TRAK1. Interacts with KIF21B. Identified in a complex of 720 kDa composed of LHFPL4, NLGN2, GABRA1, GABRB2, GABRG2 and GABRB3. Interacts with LHFPL4. Interacts with NLGN2. Interacts with SHISA7; interaction leads to the regulation of GABA(A) receptor trafficking, channel deactivation kinetics and pharmacology. Cerebellar granule cells, Purkinje cells and stellate/basket cells.

The protein localises to the postsynaptic cell membrane. It localises to the cell membrane. The protein resides in the cytoplasmic vesicle membrane. The enzyme catalyses chloride(in) = chloride(out). Allosterically activated by benzodiazepines, the neuroanesthetic alphaxalone and pentobarbital. Inhibited by the antagonist bicuculline. Potentiated by histamine. Alpha subunit of the heteropentameric ligand-gated chloride channel gated by gamma-aminobutyric acid (GABA), a major inhibitory neurotransmitter in the brain. GABA-gated chloride channels, also named GABA(A) receptors (GABAAR), consist of five subunits arranged around a central pore and contain GABA active binding site(s) located at the alpha and beta subunit interface(s). When activated by GABA, GABAARs selectively allow the flow of chloride anions across the cell membrane down their electrochemical gradient. Alpha-1/GABRA1-containing GABAARs are largely synaptic. Chloride influx into the postsynaptic neuron following GABAAR opening decreases the neuron ability to generate a new action potential, thereby reducing nerve transmission. GABAARs containing alpha-1 and beta-2 or -3 subunits exhibit synaptogenic activity; the gamma-2 subunit being necessary but not sufficient to induce rapid synaptic contacts formation. GABAARs function also as histamine receptor where histamine binds at the interface of two neighboring beta subunits and potentiates GABA response. GABAARs containing alpha, beta and epsilon subunits also permit spontaneous chloride channel activity while preserving the structural information required for GABA-gated openings. Alpha-1-mediated plasticity in the orbitofrontal cortex regulates context-dependent action selection. Together with rho subunits, may also control neuronal and glial GABAergic transmission in the cerebellum. In Bos taurus (Bovine), this protein is Gamma-aminobutyric acid receptor subunit alpha-1 (GABRA1).